A 225-amino-acid chain; its full sequence is MNSIEFPLLARTTQNSVISTTLNDLSNWSRLSSLWPLLYGTSCCFIEFASLIGSRFDFDRYGLVPRSSPRQADLILTAGTVTMKMAPSLVRLYEQMPEPKYVIAMGACTITGGMFSTDSYSTVRGVDKLIPVDVYLPGCPPKPEAVIDAITKLRKKIAREIYEERIRSQEENRCFTTNHKFHVGRSIHTGNYDQGLLYQSPSTSEIPPETFFKYKSSVSSHELVN.

Residues cysteine 43, cysteine 44, cysteine 108, and cysteine 139 each coordinate [4Fe-4S] cluster.

The protein belongs to the complex I 20 kDa subunit family. As to quaternary structure, NDH is composed of at least 16 different subunits, 5 of which are encoded in the nucleus. Requires [4Fe-4S] cluster as cofactor.

Its subcellular location is the plastid. It is found in the chloroplast thylakoid membrane. It catalyses the reaction a plastoquinone + NADH + (n+1) H(+)(in) = a plastoquinol + NAD(+) + n H(+)(out). It carries out the reaction a plastoquinone + NADPH + (n+1) H(+)(in) = a plastoquinol + NADP(+) + n H(+)(out). In terms of biological role, NDH shuttles electrons from NAD(P)H:plastoquinone, via FMN and iron-sulfur (Fe-S) centers, to quinones in the photosynthetic chain and possibly in a chloroplast respiratory chain. The immediate electron acceptor for the enzyme in this species is believed to be plastoquinone. Couples the redox reaction to proton translocation, and thus conserves the redox energy in a proton gradient. The chain is NAD(P)H-quinone oxidoreductase subunit K, chloroplastic from Eucalyptus globulus subsp. globulus (Tasmanian blue gum).